Reading from the N-terminus, the 349-residue chain is MIVNRYKDAGVDVNAGYELVRRIKGAVASTKRPGYVGNIGGFGGLFDLDSLGYDHPVLVSGTDGVGTKLIIAQKMDKNDTVGIDVVAMCVNDVLAQGAEPLFFLDYIACGHNDPALLASVVQGVAEGCKQAGASLIGGETAEMPDMYAPDEYDLAGFTVGVAEKDRLLSVDTPQAGDVLLGLASSGVHSNGFSLVRKILFKDHDVKLTDKPAELKGKSVGESLLAPTRIYIKSVLPLIKQGLVHGVAHITGGGLIENVPRMFNDGLRAEIAAGSWEVPDIFNYLKQVGNLSDDDCWQTFNMGLGMILAVPADKKEEAKQLLLASGEKVFEVGHLSERTDGEKIFIKLVE.

This sequence belongs to the AIR synthase family.

The protein localises to the cytoplasm. It carries out the reaction 2-formamido-N(1)-(5-O-phospho-beta-D-ribosyl)acetamidine + ATP = 5-amino-1-(5-phospho-beta-D-ribosyl)imidazole + ADP + phosphate + H(+). The protein operates within purine metabolism; IMP biosynthesis via de novo pathway; 5-amino-1-(5-phospho-D-ribosyl)imidazole from N(2)-formyl-N(1)-(5-phospho-D-ribosyl)glycinamide: step 2/2. The sequence is that of Phosphoribosylformylglycinamidine cyclo-ligase from Lactobacillus delbrueckii subsp. bulgaricus (strain ATCC BAA-365 / Lb-18).